The primary structure comprises 943 residues: Nuclear factor of activated T-cells, cytoplasmic 1 (943 aa).

Residues 22-48 (GRGETLGPAPRAGGTMKSAEEEHYGYA) are disordered. Residues 118 to 123 (PRIEIT) are calcineurin-binding. Residues 126–218 (LGLYHNNNQF…CVSPKTTDPE (93 aa)) are transactivation domain A (TAD-A). A disordered region spans residues 200-298 (PQTSPWQSPC…GSPRVSVTDD (99 aa)). Positions 201 to 214 (QTSPWQSPCVSPKT) are enriched in polar residues. 2 tandem repeats follow at residues 203-219 (SPWQ…DPEE) and 233-249 (SPRH…VTEE). The tract at residues 203–298 (SPWQSPCVSP…GSPRVSVTDD (96 aa)) is 3 X SP repeats. Residues Ser233 and Ser237 each carry the phosphoserine modification. The span at 236–248 (HSPSTSPRASVTE) shows a compositional bias: polar residues. Position 245 is a phosphoserine; by PKA (Ser245). The Nuclear localization signal signature appears at 265 to 267 (KRK). Position 269 is a phosphoserine; by PKA (Ser269). The segment covering 276 to 288 (PYSPHHSPTPSPH) has biased composition (pro residues). Repeat 3 spans residues 282–298 (SPTPSPHGSPRVSVTDD). At Ser294 the chain carries Phosphoserine; by PKA. The short motif at 310–321 (SAIVAAINALTT) is the Nuclear export signal element. One can recognise an RHD domain in the interval 410 to 592 (PTLPALDWQL…NPIECSQRSA (183 aa)). The DNA-binding element occupies 439–446 (RAHYETEG). The short motif at 682-684 (KRK) is the Nuclear localization signal element. A transactivation domain B (TAD-B) region spans residues 703–943 (TEPTDDYEPA…NDLSSTSTHS (241 aa)). Positions 787-912 (HLGLPQPAGE…SPNLAPIPVT (126 aa)) are disordered. Residues 846–855 (SPSPPLPPAT) show a composition bias toward pro residues. A Nuclear export signal motif is present at residues 924–933 (YLDDVNEIIR).

As to quaternary structure, member of the multicomponent NFATC transcription complex that consists of at least two components, a pre-existing cytoplasmic component NFATC2 and an inducible nuclear component NFATC1. Other members such as NFATC4, NFATC3 or members of the activating protein-1 family, MAF, GATA4 and Cbp/p300 can also bind the complex. NFATC proteins bind to DNA as monomers. Interacts with HOMER2 and HOMER3; this interaction may compete with calcineurin/PPP3CA-binding and hence prevent NFATC1 dephosphorylation and activation. Interacts with TLE6/GRG6. In terms of processing, phosphorylated by NFATC-kinase and GSK3B; phosphorylation induces NFATC1 nuclear exit and dephosphorylation by calcineurin promotes nuclear import. Phosphorylation by PKA and DYRK2 negatively modulates nuclear accumulation, and promotes subsequent phosphorylation by GSK3B or casein kinase 1. In terms of tissue distribution, expressed in thymus, peripheral leukocytes as T-cells and spleen. Isoforms A are preferentially expressed in effector T-cells (thymus and peripheral leukocytes) whereas isoforms B and isoforms C are preferentially expressed in naive T-cells (spleen). Isoforms B are expressed in naive T-cells after first antigen exposure and isoforms A are expressed in effector T-cells after second antigen exposure. Isoforms IA are widely expressed but not detected in liver nor pancreas, neural expression is strongest in corpus callosum. Isoforms IB are expressed mostly in muscle, cerebellum, placenta and thymus, neural expression in fetal and adult brain, strongest in corpus callosum.

It is found in the cytoplasm. It localises to the nucleus. Plays a role in the inducible expression of cytokine genes in T-cells, especially in the induction of the IL-2 or IL-4 gene transcription. Also controls gene expression in embryonic cardiac cells. Could regulate not only the activation and proliferation but also the differentiation and programmed death of T-lymphocytes as well as lymphoid and non-lymphoid cells. Required for osteoclastogenesis and regulates many genes important for osteoclast differentiation and function. This chain is Nuclear factor of activated T-cells, cytoplasmic 1 (NFATC1), found in Homo sapiens (Human).